Consider the following 308-residue polypeptide: MEWKGRDVISIRDFSKEDIEVVLSTAERLEKEMKEKGQLEYAKGKILATLFFEPSTRTRLSFESAMHRLGGSVIGFAEASTSSVKKGESLRDTIKTVEQYSDVIVIRHPKEGAARLAAEVADIPVINAGDGSNQHPTQTLLDLYTIKKEFGTIDGLKIGLLGDLKYGRTVHSLAEALAFYDVELYLISPELLRMPKHIVEELRERGMKIVETTKLEEVIGELDVLYVTRIQKERFPDEQEYLKVKGSYQVNLKILENVKDSLRIMHPLPRVDEIHPEVDKTKHAIYFKQVFNGVPVRMALLALVLGVI.

Residues R57 and T58 each contribute to the carbamoyl phosphate site. K86 is a binding site for L-aspartate. Carbamoyl phosphate contacts are provided by R107, H135, and Q138. Residues R168 and R229 each contribute to the L-aspartate site. Carbamoyl phosphate contacts are provided by L268 and P269.

It belongs to the aspartate/ornithine carbamoyltransferase superfamily. ATCase family. In terms of assembly, heterooligomer of catalytic and regulatory chains.

The enzyme catalyses carbamoyl phosphate + L-aspartate = N-carbamoyl-L-aspartate + phosphate + H(+). It functions in the pathway pyrimidine metabolism; UMP biosynthesis via de novo pathway; (S)-dihydroorotate from bicarbonate: step 2/3. Its function is as follows. Catalyzes the condensation of carbamoyl phosphate and aspartate to form carbamoyl aspartate and inorganic phosphate, the committed step in the de novo pyrimidine nucleotide biosynthesis pathway. The chain is Aspartate carbamoyltransferase catalytic subunit from Pyrococcus horikoshii (strain ATCC 700860 / DSM 12428 / JCM 9974 / NBRC 100139 / OT-3).